We begin with the raw amino-acid sequence, 111 residues long: Thioredoxin 2 (111 aa).

A Thioredoxin domain is found at 2-109 (SKGVITITDA…LLSFLDTHLN (108 aa)). A disulfide bond links Cys-33 and Cys-36.

The protein belongs to the thioredoxin family.

Functionally, participates in various redox reactions through the reversible oxidation of its active center dithiol to a disulfide and catalyzes dithiol-disulfide exchange reactions. This Nostoc sp. (strain PCC 7120 / SAG 25.82 / UTEX 2576) protein is Thioredoxin 2 (trxB).